The chain runs to 513 residues: ATP synthase subunit alpha (513 aa).

169-176 provides a ligand contact to ATP; the sequence is GDRQTGKT.

This sequence belongs to the ATPase alpha/beta chains family. F-type ATPases have 2 components, CF(1) - the catalytic core - and CF(0) - the membrane proton channel. CF(1) has five subunits: alpha(3), beta(3), gamma(1), delta(1), epsilon(1). CF(0) has three main subunits: a(1), b(2) and c(9-12). The alpha and beta chains form an alternating ring which encloses part of the gamma chain. CF(1) is attached to CF(0) by a central stalk formed by the gamma and epsilon chains, while a peripheral stalk is formed by the delta and b chains.

It localises to the cell inner membrane. It carries out the reaction ATP + H2O + 4 H(+)(in) = ADP + phosphate + 5 H(+)(out). Produces ATP from ADP in the presence of a proton gradient across the membrane. The alpha chain is a regulatory subunit. In Shewanella sp. (strain MR-4), this protein is ATP synthase subunit alpha.